Reading from the N-terminus, the 422-residue chain is CinA-like protein (422 aa).

It belongs to the CinA family.

The chain is CinA-like protein from Mycolicibacterium vanbaalenii (strain DSM 7251 / JCM 13017 / BCRC 16820 / KCTC 9966 / NRRL B-24157 / PYR-1) (Mycobacterium vanbaalenii).